We begin with the raw amino-acid sequence, 389 residues long: Very-long-chain 3-oxoacyl-CoA reductase (389 aa).

Residues 34-54 form a helical membrane-spanning segment; the sequence is IAVFLLAIGLFHVALKVVSYV. The NADP(+) site is built by V80, D134, N162, Y239, K243, V272, and S274. Y239 functions as the Proton donor in the catalytic mechanism. Catalysis depends on K243, which acts as the Lowers pKa of active site Tyr. The tract at residues 359-389 is disordered; that stretch reads QAAGGVADPKNTTAAREGYATESLKNETLKH.

This sequence belongs to the short-chain dehydrogenases/reductases (SDR) family.

The protein localises to the endoplasmic reticulum membrane. The enzyme catalyses a very-long-chain (3R)-3-hydroxyacyl-CoA + NADP(+) = a very-long-chain 3-oxoacyl-CoA + NADPH + H(+). It participates in lipid metabolism; fatty acid biosynthesis. In terms of biological role, component of the microsomal membrane bound fatty acid elongation system, which produces the 26-carbon very long-chain fatty acids (VLCFA) from palmitate. Catalyzes the reduction of the 3-ketoacyl-CoA intermediate that is formed in each cycle of fatty acid elongation. VLCFAs serve as precursors for ceramide and sphingolipids. The sequence is that of Very-long-chain 3-oxoacyl-CoA reductase from Yarrowia lipolytica (strain CLIB 122 / E 150) (Yeast).